Consider the following 425-residue polypeptide: Dihydroorotase (425 aa).

Zn(2+) contacts are provided by histidine 56 and histidine 58. Substrate-binding positions include 58–60 (HYR) and asparagine 90. Residues aspartate 148, histidine 175, and histidine 228 each contribute to the Zn(2+) site. Asparagine 274 is a binding site for substrate. Aspartate 301 contributes to the Zn(2+) binding site. The active site involves aspartate 301. Substrate is bound by residues histidine 305 and 319 to 320 (FG).

The protein belongs to the metallo-dependent hydrolases superfamily. DHOase family. Class I DHOase subfamily. Zn(2+) serves as cofactor.

The enzyme catalyses (S)-dihydroorotate + H2O = N-carbamoyl-L-aspartate + H(+). It participates in pyrimidine metabolism; UMP biosynthesis via de novo pathway; (S)-dihydroorotate from bicarbonate: step 3/3. Catalyzes the reversible cyclization of carbamoyl aspartate to dihydroorotate. The protein is Dihydroorotase of Lactobacillus acidophilus (strain ATCC 700396 / NCK56 / N2 / NCFM).